The sequence spans 46 residues: Photosystem II reaction center protein K (46 aa).

Positions 1 to 9 (MLILFNTFA) are excised as a propeptide. The helical transmembrane segment at 25-45 (LPLIPLFFFLLVFVWQAAVGF) threads the bilayer.

This sequence belongs to the PsbK family. In terms of assembly, PSII is composed of 1 copy each of membrane proteins PsbA, PsbB, PsbC, PsbD, PsbE, PsbF, PsbH, PsbI, PsbJ, PsbK, PsbL, PsbM, PsbT, PsbX, PsbY, Psb30/Ycf12, peripheral proteins PsbO, CyanoQ (PsbQ), PsbU, PsbV and a large number of cofactors. It forms dimeric complexes.

The protein localises to the cellular thylakoid membrane. In terms of biological role, one of the components of the core complex of photosystem II (PSII). PSII is a light-driven water:plastoquinone oxidoreductase that uses light energy to abstract electrons from H(2)O, generating O(2) and a proton gradient subsequently used for ATP formation. It consists of a core antenna complex that captures photons, and an electron transfer chain that converts photonic excitation into a charge separation. In Prochlorococcus marinus (strain MIT 9301), this protein is Photosystem II reaction center protein K.